The sequence spans 180 residues: UPF0340 protein LACR_0494 (180 aa).

Belongs to the UPF0340 family.

The polypeptide is UPF0340 protein LACR_0494 (Lactococcus lactis subsp. cremoris (strain SK11)).